The sequence spans 247 residues: Submandibular gland secretory Glx-rich protein CB (247 aa).

The signal sequence occupies residues 1 to 18; sequence MLVVLLTAALLALSSAQG. A disordered region spans residues 14-219; that stretch reads SSAQGTDEEV…PQHYRGRPPK (206 aa). Composition is skewed to low complexity over residues 39–50, 58–71, 81–93, 104–116, 126–139, 150–159, and 178–196; these read PVDSGSDPPSAD, EGES…EPPA, QQEP…QEPP, QQQQ…QEPP, QQESTQAENQ, and VESP…QQTN. 5 tandem repeats follow at residues 67–89, 90–112, 113–135, 136–158, and 159–181. The interval 67–181 is 5 X 23 AA tandem repeats; sequence EEPPATSGSE…QPEEGNVESP (115 aa). The segment covering 197–212 has biased composition (basic and acidic residues); sequence PEEKPPAPKTQEEPQH.

As to expression, submandibular gland acinar cells.

The protein localises to the secreted. In terms of biological role, GRP proteins have a marked affinity for hydroxyapatite. They may play a role in the formation of the protective acquired pellicle at the saliva-tooth interface. This is Submandibular gland secretory Glx-rich protein CB (Grpcb) from Rattus norvegicus (Rat).